Here is a 690-residue protein sequence, read N- to C-terminus: Elongation factor G (690 aa).

In terms of domain architecture, tr-type G spans 8 to 283 (EDYRNFGIMA…AVVDYLPSPL (276 aa)). GTP contacts are provided by residues 17-24 (AHIDAGKT), 81-85 (DTPGH), and 135-138 (NKMD).

This sequence belongs to the TRAFAC class translation factor GTPase superfamily. Classic translation factor GTPase family. EF-G/EF-2 subfamily.

It localises to the cytoplasm. Functionally, catalyzes the GTP-dependent ribosomal translocation step during translation elongation. During this step, the ribosome changes from the pre-translocational (PRE) to the post-translocational (POST) state as the newly formed A-site-bound peptidyl-tRNA and P-site-bound deacylated tRNA move to the P and E sites, respectively. Catalyzes the coordinated movement of the two tRNA molecules, the mRNA and conformational changes in the ribosome. In Rhodopseudomonas palustris (strain ATCC BAA-98 / CGA009), this protein is Elongation factor G.